The primary structure comprises 133 residues: Ribosome-binding factor A (133 aa).

It belongs to the RbfA family. In terms of assembly, monomer. Binds 30S ribosomal subunits, but not 50S ribosomal subunits or 70S ribosomes.

It is found in the cytoplasm. One of several proteins that assist in the late maturation steps of the functional core of the 30S ribosomal subunit. Associates with free 30S ribosomal subunits (but not with 30S subunits that are part of 70S ribosomes or polysomes). Required for efficient processing of 16S rRNA. May interact with the 5'-terminal helix region of 16S rRNA. The polypeptide is Ribosome-binding factor A (Nostoc sp. (strain PCC 7120 / SAG 25.82 / UTEX 2576)).